We begin with the raw amino-acid sequence, 228 residues long: Urease accessory protein UreF (228 aa).

This sequence belongs to the UreF family. In terms of assembly, ureD, UreF and UreG form a complex that acts as a GTP-hydrolysis-dependent molecular chaperone, activating the urease apoprotein by helping to assemble the nickel containing metallocenter of UreC. The UreE protein probably delivers the nickel.

It localises to the cytoplasm. Functionally, required for maturation of urease via the functional incorporation of the urease nickel metallocenter. In Blochmanniella pennsylvanica (strain BPEN), this protein is Urease accessory protein UreF.